A 610-amino-acid chain; its full sequence is MNPPFDSASFLKTVTHQPGVYRMYNADAVVIYVGKAKDLQKRLSSYFRKKVDSEKTRALVSNIAKIDVTVTHTETEALILEHNYIKQYLPKYNVLLRDDKSYPYILISGHKHPRLSMHRGAKKRKGEYFGPYPDSGAVRETLHLLQKIFPVRQCEDTVYSNRTRPCLMYQIGRCAGPCVSSIISDEEYAELVGFVRLFLQGKDQQVLKQLIEKMEVASQQLRFEDAAKFRDQIQAIRRVQEQQYVSEDSMDDMDVLGFAQENGIACIHILMIRQGKVLGSRSHFPKIPQNTSQQEVFDSFLTQYYLSHNEARTIPSRIILNQELADDLEPIQKALSEVAGRKVHFHTSPTGARGRYLKLSNTNALTAITTKINHKMTINQRFKALRETLGMESIMRMECFDISHTMGESTIASCVVFNNEGPVKQEYRRYNITGITGGDDYAAMGQALERRYSKQLDVEKIPDIIFIDGGKGQLNRAHEIIAQYWGDWPKRPIMIGIAKGVTRKPGLETLITVDGEEFNLPSDAPALHLIQHIRDESHNHAIAGHRAKRGKTRRTSALEGIEGVGPKRRQALLKYMGGLQELKRASVEEIAKVPGISHSLAEIIFQALKQ.

The GIY-YIG domain maps to 16-94 (HQPGVYRMYN…IKQYLPKYNV (79 aa)). The UVR domain maps to 204–239 (QQVLKQLIEKMEVASQQLRFEDAAKFRDQIQAIRRV).

The protein belongs to the UvrC family. As to quaternary structure, interacts with UvrB in an incision complex.

The protein resides in the cytoplasm. The UvrABC repair system catalyzes the recognition and processing of DNA lesions. UvrC both incises the 5' and 3' sides of the lesion. The N-terminal half is responsible for the 3' incision and the C-terminal half is responsible for the 5' incision. The protein is UvrABC system protein C of Vibrio parahaemolyticus serotype O3:K6 (strain RIMD 2210633).